We begin with the raw amino-acid sequence, 508 residues long: Maturase K (508 aa).

This sequence belongs to the intron maturase 2 family. MatK subfamily.

It is found in the plastid. The protein resides in the chloroplast. Functionally, usually encoded in the trnK tRNA gene intron. Probably assists in splicing its own and other chloroplast group II introns. The chain is Maturase K from Ranunculus glacialis (Glacier buttercup).